Here is a 154-residue protein sequence, read N- to C-terminus: Protein-export protein SecB (154 aa).

This sequence belongs to the SecB family. Homotetramer, a dimer of dimers. One homotetramer interacts with 1 SecA dimer.

Its subcellular location is the cytoplasm. One of the proteins required for the normal export of preproteins out of the cell cytoplasm. It is a molecular chaperone that binds to a subset of precursor proteins, maintaining them in a translocation-competent state. It also specifically binds to its receptor SecA. In Buchnera aphidicola subsp. Schizaphis graminum (strain Sg), this protein is Protein-export protein SecB.